The primary structure comprises 960 residues: Angiomotin-like protein 1 (960 aa).

The tract at residues 196–248 is disordered; that stretch reads SQFFRGQQPPPPPPQQQPGAVGHSYYMAGGASQKARTEGRPTVSRANSGQAHK. Residues S243, S271, and S297 each carry the phosphoserine modification. The stretch at 261–281 forms a coiled coil; it reads RSLSERIMQLSLERNGAKQHL. Disordered stretches follow at residues 277–317, 381–407, and 413–432; these read AKQH…EYPF, LPFPSTAQQHSPVSSQNSSVSGPLHSV, and PPMALGAAPPPPAASPSQQL. Positions 388-401 are enriched in low complexity; it reads QQHSPVSSQNSSVS. Coiled-coil stretches lie at residues 440 to 641 and 667 to 697; these read VERA…WLER and ALMELVREKEERILALEADMTKWEQKYVEES. S722 carries the post-translational modification Phosphoserine. The stretch at 731 to 761 forms a coiled coil; the sequence is SLEAHIWQEEEEVVQATRRCQDMEYTIKNLH. The segment at 775 to 826 is disordered; it reads QQRSRKDAGKTDSSSLRPARSVPSIAAATGTHSRQTSLTSSQLAEERKEEKT. A phosphoserine mark is found at S795, S807, and S830. A compositionally biased stretch (polar residues) spans 804 to 817; that stretch reads GTHSRQTSLTSSQL. Residues 842–952 form a disordered region; the sequence is NDHASTPLLP…NLLHKPEFPD (111 aa). Residues 845 to 870 are compositionally biased toward low complexity; sequence ASTPLLPTPSAATLSPPTPGTSASSA. Polar residues predominate over residues 898-911; the sequence is PTRSRLSGTPSNSP. The residue at position 904 (S904) is a Phosphoserine. T906 is modified (phosphothreonine). S910 carries the phosphoserine modification. A PDZ-binding motif is present at residues 957 to 960; sequence EVLI.

This sequence belongs to the angiomotin family. Polyubiquitinated by NEDD4, leading to proteasomal degradation.

It localises to the cell junction. Its subcellular location is the tight junction. In terms of biological role, inhibits the Wnt/beta-catenin signaling pathway, probably by recruiting CTNNB1 to recycling endosomes and hence preventing its translocation to the nucleus. The polypeptide is Angiomotin-like protein 1 (AMOTL1) (Bos taurus (Bovine)).